The primary structure comprises 435 residues: ATP-dependent protease ATPase subunit HslU (435 aa).

ATP is bound by residues Ile-18, 60–65 (GVGKTE), Asp-248, Glu-313, and Arg-385.

The protein belongs to the ClpX chaperone family. HslU subfamily. A double ring-shaped homohexamer of HslV is capped on each side by a ring-shaped HslU homohexamer. The assembly of the HslU/HslV complex is dependent on binding of ATP.

The protein localises to the cytoplasm. ATPase subunit of a proteasome-like degradation complex; this subunit has chaperone activity. The binding of ATP and its subsequent hydrolysis by HslU are essential for unfolding of protein substrates subsequently hydrolyzed by HslV. HslU recognizes the N-terminal part of its protein substrates and unfolds these before they are guided to HslV for hydrolysis. The sequence is that of ATP-dependent protease ATPase subunit HslU from Rhizobium johnstonii (strain DSM 114642 / LMG 32736 / 3841) (Rhizobium leguminosarum bv. viciae).